Reading from the N-terminus, the 212-residue chain is uncharacterized protein (212 aa).

Belongs to the IIV-6 309L family.

This is an uncharacterized protein from Aedes vexans (Inland floodwater mosquito).